The chain runs to 774 residues: Lysyl oxidase homolog 2 (774 aa).

The first 24 residues, 1–24 (MEGFLGFNHNHCFIVLFFVSLSLA), serve as a signal peptide directing secretion. 4 SRCR domains span residues 57-158 (LRLA…VVCS), 187-301 (IRPI…ASCV), 325-424 (VRLK…VRCN), and 434-543 (LRLV…VSCS). 9 cysteine pairs are disulfide-bonded: Cys-83–Cys-147, Cys-96–Cys-157, Cys-127–Cys-137, Cys-217–Cys-290, Cys-230–Cys-300, Cys-264–Cys-274, Cys-350–Cys-413, Cys-363–Cys-423, and Cys-394–Cys-404. The N-linked (GlcNAc...) asparagine glycan is linked to Asn-287. N-linked (GlcNAc...) asparagine glycosylation is present at Asn-454. 3 disulfides stabilise this stretch: Cys-463–Cys-529, Cys-476–Cys-542, and Cys-510–Cys-520. Residues 547 to 751 (PDLVLNAELV…MYNSVHNGAN (205 aa)) form a lysyl-oxidase like region. Ca(2+) contacts are provided by Asp-548 and Leu-549. 4 disulfides stabilise this stretch: Cys-572-Cys-624, Cys-578-Cys-694, Cys-656-Cys-672, and Cys-662-Cys-684. Cu cation-binding residues include His-625, His-627, and His-629. Residue Asn-643 is glycosylated (N-linked (GlcNAc...) asparagine). The segment at residues 652-688 (KASFCLEDTECEADVQKQYECANFGEQGITVGCWDVY) is a cross-link (lysine tyrosylquinone (Lys-Tyr)). The residue at position 688 (Tyr-688) is a 2',4',5'-topaquinone. Ca(2+) contacts are provided by Glu-721, Asp-723, Asn-726, and Asn-727.

This sequence belongs to the lysyl oxidase family. The cofactor is Cu cation. It depends on lysine tyrosylquinone residue as a cofactor. Post-translationally, the lysine tyrosylquinone cross-link (LTQ) is generated by condensation of the epsilon-amino group of a lysine with a topaquinone produced by oxidation of tyrosine.

The protein resides in the secreted. The protein localises to the extracellular space. Its subcellular location is the extracellular matrix. It is found in the basement membrane. It localises to the nucleus. The protein resides in the chromosome. The protein localises to the endoplasmic reticulum. It catalyses the reaction L-lysyl-[protein] + O2 + H2O = (S)-2-amino-6-oxohexanoyl-[protein] + H2O2 + NH4(+). Mediates the post-translational oxidative deamination of lysine residues on target proteins leading to the formation of deaminated lysine (allysine). Acts as a transcription corepressor and specifically mediates deamination of trimethylated 'Lys-4' of histone H3 (H3K4me3), a specific tag for epigenetic transcriptional activation. Shows no activity against histone H3 when it is trimethylated on 'Lys-9' (H3K9me3) or 'Lys-27' (H3K27me3) or when 'Lys-4' is monomethylated (H3K4me1) or dimethylated (H3K4me2). Also mediates deamination of methylated TAF10, a member of the transcription factor IID (TFIID) complex, which induces release of TAF10 from promoters, leading to inhibition of TFIID-dependent transcription. LOXL2-mediated deamination of TAF10 results in transcriptional repression of genes required for embryonic stem cell pluripotency including POU5F1/OCT4, NANOG, KLF4 and SOX2. Involved in epithelial to mesenchymal transition (EMT) via interaction with SNAI1 and participates in repression of E-cadherin CDH1, probably by mediating deamination of histone H3. During EMT, involved with SNAI1 in negatively regulating pericentromeric heterochromatin transcription. SNAI1 recruits LOXL2 to pericentromeric regions to oxidize histone H3 and repress transcription which leads to release of heterochromatin component CBX5/HP1A, enabling chromatin reorganization and acquisition of mesenchymal traits. Interacts with the endoplasmic reticulum protein HSPA5 which activates the IRE1-XBP1 pathway of the unfolded protein response, leading to expression of several transcription factors involved in EMT and subsequent EMT induction. When secreted into the extracellular matrix, promotes cross-linking of extracellular matrix proteins by mediating oxidative deamination of peptidyl lysine residues in precursors to fibrous collagen and elastin. Acts as a regulator of sprouting angiogenesis, probably via collagen IV scaffolding. Acts as a regulator of chondrocyte differentiation, probably by regulating expression of factors that control chondrocyte differentiation. This is Lysyl oxidase homolog 2 (LOXL2) from Gallus gallus (Chicken).